A 129-amino-acid polypeptide reads, in one-letter code: Glycine cleavage system H protein (129 aa).

One can recognise a Lipoyl-binding domain in the interval 24-106 (LVRVGISAFA…HGEGWLLVLR (83 aa)). The residue at position 65 (Lys-65) is an N6-lipoyllysine.

It belongs to the GcvH family. In terms of assembly, the glycine cleavage system is composed of four proteins: P, T, L and H. (R)-lipoate is required as a cofactor.

Its function is as follows. The glycine cleavage system catalyzes the degradation of glycine. The H protein shuttles the methylamine group of glycine from the P protein to the T protein. The polypeptide is Glycine cleavage system H protein (Synechococcus sp. (strain CC9605)).